The sequence spans 663 residues: 4-hydroxy-3-methylbut-2-en-1-yl diphosphate synthase (flavodoxin) (663 aa).

The [4Fe-4S] cluster site is built by Cys568, Cys571, Cys602, and Glu609.

This sequence belongs to the IspG family. The cofactor is [4Fe-4S] cluster.

The enzyme catalyses (2E)-4-hydroxy-3-methylbut-2-enyl diphosphate + oxidized [flavodoxin] + H2O + 2 H(+) = 2-C-methyl-D-erythritol 2,4-cyclic diphosphate + reduced [flavodoxin]. Its pathway is isoprenoid biosynthesis; isopentenyl diphosphate biosynthesis via DXP pathway; isopentenyl diphosphate from 1-deoxy-D-xylulose 5-phosphate: step 5/6. Its function is as follows. Converts 2C-methyl-D-erythritol 2,4-cyclodiphosphate (ME-2,4cPP) into 1-hydroxy-2-methyl-2-(E)-butenyl 4-diphosphate. This chain is 4-hydroxy-3-methylbut-2-en-1-yl diphosphate synthase (flavodoxin), found in Leptospira borgpetersenii serovar Hardjo-bovis (strain JB197).